The sequence spans 204 residues: MSAQDKLIKPSHLITMDDIIREGNPTLRAVAKEVSLPLCDEDILLGEKMMQFLKHSQDPVMAEKLGLRAGVGLAAPQIDVSKRIIAVLVPNLPDKEGNPPKEAYSWQEVLYNPKIVSHSVQDAALSDGEGCLSVDRVVEGYVVRHARVTVDYYDKEGQQHRIKLKGYNAIVVQHEIDHINGVLFYDRINAKNPFETKEELLILD.

Fe cation is bound by residues Cys131 and His174. Glu175 is an active-site residue. Residue His178 coordinates Fe cation.

Belongs to the polypeptide deformylase family. The cofactor is Fe(2+).

The catalysed reaction is N-terminal N-formyl-L-methionyl-[peptide] + H2O = N-terminal L-methionyl-[peptide] + formate. Removes the formyl group from the N-terminal Met of newly synthesized proteins. Requires at least a dipeptide for an efficient rate of reaction. N-terminal L-methionine is a prerequisite for activity but the enzyme has broad specificity at other positions. The polypeptide is Peptide deformylase (Streptococcus pyogenes serotype M1).